Reading from the N-terminus, the 837-residue chain is Tuftelin-interacting protein 11 (837 aa).

A compositionally biased stretch (basic and acidic residues) spans 1–13; the sequence is MSLSHLYRDGEGH. Disordered regions lie at residues 1–31, 54–73, and 85–133; these read MSLS…DWDL, WAER…RARD, and LKKG…KGFA. The interval 1-50 is required for interaction with DHX15; it reads MSLSHLYRDGEGHMDDDDDERENFEITDWDLQNEFNPNRQRHWQTKEEAT. At serine 2 the chain carries Phosphoserine. The segment covering 14-28 has biased composition (acidic residues); it reads MDDDDDERENFEITD. Residues 54-64 are compositionally biased toward basic and acidic residues; the sequence is WAERDSDEERP. Residues serine 59 and serine 98 each carry the phosphoserine modification. Acidic residues predominate over residues 91-102; sequence EEAELEDSEDEE. Basic and acidic residues predominate over residues 103 to 116; the sequence is KPVKQDDFPKDFGP. Serine 144 carries the phosphoserine modification. One can recognise a G-patch domain in the interval 149-195; it reads TKGIGQKLLQKMGYVPGRGLGKNAQGIINPIEAKQRKGKGAVGAYGS. Disordered stretches follow at residues 183–236 and 289–312; these read QRKG…KKKP and HNVP…EAKA. Serine 210 bears the Phosphoserine mark. A compositionally biased stretch (basic and acidic residues) spans 217–231; that stretch reads EFQKELSQWRKDPSG. Positions 700-705 match the Nuclear localization signal motif; the sequence is VKDKFN. A required for nuclear speckle localization region spans residues 710–734; that stretch reads IMNRAVSSNVGAYMQPGARENIAYL.

It belongs to the TFP11/STIP family. As to quaternary structure, identified in the spliceosome C complex. Found in the Intron Large (IL) complex, a post-mRNA release spliceosomal complex containing the excised intron, U2, U5 and U6 snRNPs, and splicing factors. Interacts with TUFT1. Interacts with DHX15; indicative for a recruitment of DHX15 to the IL complex. Interacts with GCFC2.

It is found in the cytoplasm. It localises to the nucleus. In terms of biological role, involved in pre-mRNA splicing, specifically in spliceosome disassembly during late-stage splicing events. Intron turnover seems to proceed through reactions in two lariat-intron associated complexes termed Intron Large (IL) and Intron Small (IS). In cooperation with DHX15 seems to mediate the transition of the U2, U5 and U6 snRNP-containing IL complex to the snRNP-free IS complex leading to efficient debranching and turnover of excised introns. May play a role in the differentiation of ameloblasts and odontoblasts or in the forming of the enamel extracellular matrix. This chain is Tuftelin-interacting protein 11 (TFIP11), found in Canis lupus familiaris (Dog).